A 166-amino-acid polypeptide reads, in one-letter code: Small ribosomal subunit protein uS5 (166 aa).

In terms of domain architecture, S5 DRBM spans 11 to 74; sequence LQEKLVAVNR…EQARRNMVKV (64 aa).

This sequence belongs to the universal ribosomal protein uS5 family. As to quaternary structure, part of the 30S ribosomal subunit. Contacts proteins S4 and S8.

Its function is as follows. With S4 and S12 plays an important role in translational accuracy. Located at the back of the 30S subunit body where it stabilizes the conformation of the head with respect to the body. This chain is Small ribosomal subunit protein uS5, found in Tolumonas auensis (strain DSM 9187 / NBRC 110442 / TA 4).